Reading from the N-terminus, the 950-residue chain is Bifunctional glutamine synthetase adenylyltransferase/adenylyl-removing enzyme (950 aa).

The adenylyl removase stretch occupies residues 1–440 (MLPLPSELQI…VFDHLIGDDA (440 aa)). An adenylyl transferase region spans residues 449–950 (HGLYKSLWQD…KWLVAAPSDV (502 aa)).

This sequence belongs to the GlnE family. It depends on Mg(2+) as a cofactor.

It catalyses the reaction [glutamine synthetase]-O(4)-(5'-adenylyl)-L-tyrosine + phosphate = [glutamine synthetase]-L-tyrosine + ADP. The catalysed reaction is [glutamine synthetase]-L-tyrosine + ATP = [glutamine synthetase]-O(4)-(5'-adenylyl)-L-tyrosine + diphosphate. Involved in the regulation of glutamine synthetase GlnA, a key enzyme in the process to assimilate ammonia. When cellular nitrogen levels are high, the C-terminal adenylyl transferase (AT) inactivates GlnA by covalent transfer of an adenylyl group from ATP to specific tyrosine residue of GlnA, thus reducing its activity. Conversely, when nitrogen levels are low, the N-terminal adenylyl removase (AR) activates GlnA by removing the adenylyl group by phosphorolysis, increasing its activity. The regulatory region of GlnE binds the signal transduction protein PII (GlnB) which indicates the nitrogen status of the cell. In Yersinia enterocolitica serotype O:8 / biotype 1B (strain NCTC 13174 / 8081), this protein is Bifunctional glutamine synthetase adenylyltransferase/adenylyl-removing enzyme.